A 314-amino-acid chain; its full sequence is Mitochondrial MRF1 N(5)-glutamine methyltransferase MTQ1 (314 aa).

S-adenosyl-L-methionine contacts are provided by residues 118 to 122 (FTGTG), Asp141, and Asn188. 188 to 191 (NPPY) serves as a coordination point for substrate.

This sequence belongs to the protein N5-glutamine methyltransferase family.

The protein resides in the mitochondrion. The catalysed reaction is L-glutaminyl-[peptide chain release factor] + S-adenosyl-L-methionine = N(5)-methyl-L-glutaminyl-[peptide chain release factor] + S-adenosyl-L-homocysteine + H(+). Methylates MRF1 on 'Gln-287' using S-adenosyl L-methionine as methyl donor. In Saccharomyces cerevisiae (strain ATCC 204508 / S288c) (Baker's yeast), this protein is Mitochondrial MRF1 N(5)-glutamine methyltransferase MTQ1 (MTQ1).